The sequence spans 217 residues: MAHSIWHEKIKSFLPEHYYGRINHFLDEAYASGLVYPPRENVFKALQVTPLEETKVLILGQDPYHGPKQAQGLSFSVPEEISAPPSLINILKELADDIGPRDHHDLSTWASQGVLLLNACLTVPAGQANGHAGLIWEPFTDAVIKVLNEKDSPVVFILWGAYARKKKAFITNPKHHIIESPHPSPLSSYRGFFGSKPFSRTNAILEKEGMTGIDWLQ.

Catalysis depends on Asp62, which acts as the Proton acceptor.

It belongs to the uracil-DNA glycosylase (UDG) superfamily. UNG family.

It localises to the cytoplasm. The catalysed reaction is Hydrolyzes single-stranded DNA or mismatched double-stranded DNA and polynucleotides, releasing free uracil.. Excises uracil residues from the DNA which can arise as a result of misincorporation of dUMP residues by DNA polymerase or due to deamination of cytosine. This is Uracil-DNA glycosylase from Streptococcus pyogenes serotype M28 (strain MGAS6180).